The chain runs to 124 residues: Small ribosomal subunit protein bS16 (124 aa).

Residues 80–124 (AGLAKRPARNNPTKAQPGKKAQERAAEAKQKAEEAAAAASEAAAE) form a disordered region. Over residues 99–113 (KAQERAAEAKQKAEE) the composition is skewed to basic and acidic residues. Positions 114-124 (AAAAASEAAAE) are enriched in low complexity.

Belongs to the bacterial ribosomal protein bS16 family.

In Rhizobium meliloti (strain 1021) (Ensifer meliloti), this protein is Small ribosomal subunit protein bS16.